Consider the following 340-residue polypeptide: tRNA-cytidine(32) 2-sulfurtransferase (340 aa).

Residues 74–79 carry the PP-loop motif motif; that stretch reads SGGKDS. Cysteine 149, cysteine 152, and cysteine 240 together coordinate [4Fe-4S] cluster.

This sequence belongs to the TtcA family. As to quaternary structure, homodimer. Mg(2+) is required as a cofactor. [4Fe-4S] cluster serves as cofactor.

It localises to the cytoplasm. It catalyses the reaction cytidine(32) in tRNA + S-sulfanyl-L-cysteinyl-[cysteine desulfurase] + AH2 + ATP = 2-thiocytidine(32) in tRNA + L-cysteinyl-[cysteine desulfurase] + A + AMP + diphosphate + H(+). The protein operates within tRNA modification. In terms of biological role, catalyzes the ATP-dependent 2-thiolation of cytidine in position 32 of tRNA, to form 2-thiocytidine (s(2)C32). The sulfur atoms are provided by the cysteine/cysteine desulfurase (IscS) system. In Burkholderia ambifaria (strain MC40-6), this protein is tRNA-cytidine(32) 2-sulfurtransferase.